A 477-amino-acid polypeptide reads, in one-letter code: Ribulose bisphosphate carboxylase large chain (477 aa).

Positions 1-2 (MS) are excised as a propeptide. Position 3 is an N-acetylproline (Pro-3). Lys-14 bears the N6,N6,N6-trimethyllysine mark. Positions 123 and 173 each coordinate substrate. Lys-175 serves as the catalytic Proton acceptor. Lys-177 contacts substrate. Mg(2+) contacts are provided by Lys-201, Asp-203, and Glu-204. Residue Lys-201 is modified to N6-carboxylysine. The active-site Proton acceptor is the His-294. Positions 295, 327, and 379 each coordinate substrate.

Belongs to the RuBisCO large chain family. Type I subfamily. As to quaternary structure, heterohexadecamer of 8 large chains and 8 small chains; disulfide-linked. The disulfide link is formed within the large subunit homodimers. Mg(2+) serves as cofactor. The disulfide bond which can form in the large chain dimeric partners within the hexadecamer appears to be associated with oxidative stress and protein turnover.

Its subcellular location is the plastid. The enzyme catalyses 2 (2R)-3-phosphoglycerate + 2 H(+) = D-ribulose 1,5-bisphosphate + CO2 + H2O. It catalyses the reaction D-ribulose 1,5-bisphosphate + O2 = 2-phosphoglycolate + (2R)-3-phosphoglycerate + 2 H(+). Its function is as follows. RuBisCO catalyzes two reactions: the carboxylation of D-ribulose 1,5-bisphosphate, the primary event in carbon dioxide fixation, as well as the oxidative fragmentation of the pentose substrate in the photorespiration process. Both reactions occur simultaneously and in competition at the same active site. This Lathraea clandestina (Purple toothwort) protein is Ribulose bisphosphate carboxylase large chain (rbcL).